The sequence spans 249 residues: 1-(5-phosphoribosyl)-5-[(5-phosphoribosylamino)methylideneamino] imidazole-4-carboxamide isomerase (249 aa).

The active-site Proton acceptor is the D11. D132 functions as the Proton donor in the catalytic mechanism.

The protein belongs to the HisA/HisF family.

Its subcellular location is the cytoplasm. It catalyses the reaction 1-(5-phospho-beta-D-ribosyl)-5-[(5-phospho-beta-D-ribosylamino)methylideneamino]imidazole-4-carboxamide = 5-[(5-phospho-1-deoxy-D-ribulos-1-ylimino)methylamino]-1-(5-phospho-beta-D-ribosyl)imidazole-4-carboxamide. Its pathway is amino-acid biosynthesis; L-histidine biosynthesis; L-histidine from 5-phospho-alpha-D-ribose 1-diphosphate: step 4/9. The sequence is that of 1-(5-phosphoribosyl)-5-[(5-phosphoribosylamino)methylideneamino] imidazole-4-carboxamide isomerase from Nitrobacter winogradskyi (strain ATCC 25391 / DSM 10237 / CIP 104748 / NCIMB 11846 / Nb-255).